Consider the following 304-residue polypeptide: uncharacterized protein (304 aa).

9 consecutive transmembrane segments (helical) span residues 9 to 29 (VFYV…SIHF), 67 to 87 (IILY…GNMF), 100 to 120 (AGSI…GIFF), 131 to 151 (EFYI…INSS), 159 to 179 (FFLG…QNLI), 189 to 209 (AVVI…CLAF), 222 to 242 (IGML…GMLM), 252 to 272 (ITVF…IGYL), and 278 to 298 (INIY…LALK). 2 EamA domains span residues 13–148 (LLMG…IFVI) and 171–298 (FIQS…LALK).

It belongs to the EamA transporter family.

The protein resides in the cell membrane. This is an uncharacterized protein from Haemophilus influenzae (strain ATCC 51907 / DSM 11121 / KW20 / Rd).